We begin with the raw amino-acid sequence, 146 residues long: 3-dehydroquinate dehydratase (146 aa).

Tyr23 acts as the Proton acceptor in catalysis. 3 residues coordinate substrate: Asn74, His80, and Asp87. His100 (proton donor) is an active-site residue. Residues Ile101 to Ser102 and Arg111 contribute to the substrate site.

Belongs to the type-II 3-dehydroquinase family. As to quaternary structure, homododecamer.

The enzyme catalyses 3-dehydroquinate = 3-dehydroshikimate + H2O. Its pathway is metabolic intermediate biosynthesis; chorismate biosynthesis; chorismate from D-erythrose 4-phosphate and phosphoenolpyruvate: step 3/7. Catalyzes a trans-dehydration via an enolate intermediate. The chain is 3-dehydroquinate dehydratase from Bacillus cereus (strain ATCC 10987 / NRS 248).